The following is a 1004-amino-acid chain: Phyllocladan-16-alpha-ol synthase (1004 aa).

The DXDD motif motif lies at 321–324 (DADD). Mg(2+) is bound by residues Asp-667, Glu-671, Asn-872, Asp-873, Ser-876, and Asp-880. The DEXXE motif motif lies at 667–671 (DEFME).

Belongs to the terpene synthase family. Requires Mg(2+) as cofactor.

The enzyme catalyses (2E,6E,10E)-geranylgeranyl diphosphate = (+)-copalyl diphosphate. It carries out the reaction (+)-copalyl diphosphate + H2O = phyllocladan-16alpha-ol + diphosphate. Its function is as follows. Involved in the synthesis of labdane-related hydrocarbons by catalyzing the conversion of geranylgeranyl diphosphate (GGDP) to phyllocladan-16-alpha-ol in a two step via type B cyclization into a (+)-copalyl diphosphate ((+)-CDP) intermediate. This chain is Phyllocladan-16-alpha-ol synthase (PaDC1), found in Phomopsis amygdali (Fusicoccum amygdali).